A 259-amino-acid polypeptide reads, in one-letter code: uncharacterized protein (259 aa).

Residues 82 to 128 (NSGMAETIEEKREDFQKEEKEDFTEEQNIEDLLAAVADAEGRYQTNQ) are a coiled coil. Residues 192–259 (LIQTQNQHPR…SSSRNSSTTS (68 aa)) form a disordered region. Over residues 228 to 240 (KKVHARSRKRRKT) the composition is skewed to basic residues. Residues 241 to 259 (SSSSSSSSSSSSRNSSTTS) show a composition bias toward low complexity.

This is an uncharacterized protein from Homo sapiens (Human).